Consider the following 255-residue polypeptide: Electron transfer flavoprotein subunit beta (255 aa).

Position 2 is an N-acetylalanine (Ala-2). Residues Ala-9, 39–42 (NPFC), Cys-66, and 123–134 (GKQAIDDDCNQT) each bind AMP. The segment at 183 to 205 (ADLRLNEPRYATLPNIMKAKKKK) is recognition loop. Lys-200 is subject to N6,N6,N6-trimethyllysine; by ETFBKMT; alternate. The residue at position 200 (Lys-200) is an N6-acetyllysine; alternate. The residue at position 200 (Lys-200) is an N6-methyllysine; alternate. Lys-203 is subject to N6,N6,N6-trimethyllysine; by ETFBKMT. N6-acetyllysine; alternate is present on Lys-210. Lys-210 carries the N6-succinyllysine; alternate modification. Phosphoserine is present on residues Ser-223 and Ser-226. Lys-238 is modified (N6-acetyllysine). Lys-248 is subject to N6-acetyllysine; alternate. Position 248 is an N6-succinyllysine; alternate (Lys-248).

It belongs to the ETF beta-subunit/FixA family. In terms of assembly, heterodimer composed of ETFA and ETFB. Identified in a complex that contains ETFA, ETFB and ETFRF1. Interacts with ACADM. Post-translationally, methylated. Trimethylation at Lys-200 and Lys-203 may negatively regulate the activity in electron transfer from acyl-CoA dehydrogenases.

The protein localises to the mitochondrion matrix. Functionally, heterodimeric electron transfer flavoprotein that accepts electrons from several mitochondrial dehydrogenases, including acyl-CoA dehydrogenases, glutaryl-CoA and sarcosine dehydrogenase. It transfers the electrons to the main mitochondrial respiratory chain via ETF-ubiquinone oxidoreductase. Required for normal mitochondrial fatty acid oxidation and normal amino acid metabolism. ETFB binds an AMP molecule that probably has a purely structural role. In Sus scrofa (Pig), this protein is Electron transfer flavoprotein subunit beta.